The primary structure comprises 177 residues: Isopentenyl-diphosphate Delta-isomerase 2 (177 aa).

Mn(2+) contacts are provided by His24 and His30. The Nudix hydrolase domain occupies 28–160 (MLHRAFSIFV…PDVYTVWFKK (133 aa)). Cys65 is a catalytic residue. Cys65 contributes to the Mg(2+) binding site. His67 contributes to the Mn(2+) binding site. Position 85 (Glu85) interacts with Mg(2+). Glu110 and Glu112 together coordinate Mn(2+). Residue Glu112 is part of the active site.

Belongs to the IPP isomerase type 1 family. Homodimer. Requires Mg(2+) as cofactor. Mn(2+) serves as cofactor.

The protein resides in the cytoplasm. The catalysed reaction is isopentenyl diphosphate = dimethylallyl diphosphate. It functions in the pathway isoprenoid biosynthesis; dimethylallyl diphosphate biosynthesis; dimethylallyl diphosphate from isopentenyl diphosphate: step 1/1. Functionally, catalyzes the 1,3-allylic rearrangement of the homoallylic substrate isopentenyl (IPP) to its highly electrophilic allylic isomer, dimethylallyl diphosphate (DMAPP). The sequence is that of Isopentenyl-diphosphate Delta-isomerase 2 from Photorhabdus laumondii subsp. laumondii (strain DSM 15139 / CIP 105565 / TT01) (Photorhabdus luminescens subsp. laumondii).